The primary structure comprises 279 residues: Putative colanic acid biosynthesis glycosyl transferase WcaA (279 aa).

This sequence to R.meliloti ExoO.

The protein operates within slime biogenesis; slime polysaccharide biosynthesis. The protein is Putative colanic acid biosynthesis glycosyl transferase WcaA (wcaA) of Escherichia coli (strain K12).